The chain runs to 217 residues: Outer-membrane lipoprotein LolB (217 aa).

A signal peptide spans 1–20 (MSRAVRTLALGGLVLVGLSA). C21 carries N-palmitoyl cysteine lipidation. A lipid anchor (S-diacylglycerol cysteine) is attached at C21.

Belongs to the LolB family. Monomer.

It localises to the cell outer membrane. In terms of biological role, plays a critical role in the incorporation of lipoproteins in the outer membrane after they are released by the LolA protein. The protein is Outer-membrane lipoprotein LolB of Xanthomonas euvesicatoria pv. vesicatoria (strain 85-10) (Xanthomonas campestris pv. vesicatoria).